The following is an 87-amino-acid chain: DNA-directed RNA polymerase subunit omega (87 aa).

This sequence belongs to the RNA polymerase subunit omega family. The RNAP catalytic core consists of 2 alpha, 1 beta, 1 beta' and 1 omega subunit. When a sigma factor is associated with the core the holoenzyme is formed, which can initiate transcription.

The catalysed reaction is RNA(n) + a ribonucleoside 5'-triphosphate = RNA(n+1) + diphosphate. Promotes RNA polymerase assembly. Latches the N- and C-terminal regions of the beta' subunit thereby facilitating its interaction with the beta and alpha subunits. This Alcanivorax borkumensis (strain ATCC 700651 / DSM 11573 / NCIMB 13689 / SK2) protein is DNA-directed RNA polymerase subunit omega.